Reading from the N-terminus, the 561-residue chain is Putative transport protein Ent638_1362 (561 aa).

5 helical membrane passes run 8–28 (LLNG…LCLG), 32–52 (LGSV…LLGQ), 66–86 (FMLF…SIFF), 94–114 (MLAL…GKLF), and 158–178 (HLSL…IVAA). 2 consecutive RCK C-terminal domains span residues 202–288 (LDTD…SFRN) and 292–373 (VFDR…RIGF). 5 consecutive transmembrane segments (helical) span residues 383 to 403 (LLAF…TFQF), 406 to 426 (FSFG…LGFL), 447 to 467 (FGLM…IGHS), 475 to 495 (MLVA…LFGA), and 540 to 560 (AIAN…WPGL).

It belongs to the AAE transporter (TC 2.A.81) family. YbjL subfamily.

It localises to the cell membrane. This is Putative transport protein Ent638_1362 from Enterobacter sp. (strain 638).